A 328-amino-acid chain; its full sequence is Nicotianamine synthase 1 (328 aa).

Belongs to the nicotianamine synthase (NAS)-like family. In terms of tissue distribution, in roots but not in leaves.

The enzyme catalyses 3 S-adenosyl-L-methionine = nicotianamine + 3 S-methyl-5'-thioadenosine + 3 H(+). In terms of biological role, synthesizes nicotianamine, a polyamine that is the first intermediate in the synthesis of the phytosiderophores of the mugineic acid type found in gramineae which serves as a sensor for the physiological iron status within the plant, and/or might be involved in the transport of iron. This is Nicotianamine synthase 1 (NAS1) from Hordeum vulgare (Barley).